The primary structure comprises 220 residues: Ribosome maturation factor RimM (220 aa).

Positions 143-220 (EGEFYWVDLI…RIVVDWGLDY (78 aa)) constitute a PRC barrel domain.

This sequence belongs to the RimM family. As to quaternary structure, binds ribosomal protein uS19.

The protein resides in the cytoplasm. Functionally, an accessory protein needed during the final step in the assembly of 30S ribosomal subunit, possibly for assembly of the head region. Essential for efficient processing of 16S rRNA. May be needed both before and after RbfA during the maturation of 16S rRNA. It has affinity for free ribosomal 30S subunits but not for 70S ribosomes. This is Ribosome maturation factor RimM from Cupriavidus metallidurans (strain ATCC 43123 / DSM 2839 / NBRC 102507 / CH34) (Ralstonia metallidurans).